The following is a 107-amino-acid chain: Flagellar transcriptional regulator FlhD (107 aa).

This sequence belongs to the FlhD family. As to quaternary structure, homodimer; disulfide-linked. Forms a heterohexamer composed of two FlhC and four FlhD subunits. Each FlhC binds a FlhD dimer, forming a heterotrimer, and a hexamer assembles by dimerization of two heterotrimers.

It localises to the cytoplasm. Its function is as follows. Functions in complex with FlhC as a master transcriptional regulator that regulates transcription of several flagellar and non-flagellar operons by binding to their promoter region. Activates expression of class 2 flagellar genes, including fliA, which is a flagellum-specific sigma factor that turns on the class 3 genes. Also regulates genes whose products function in a variety of physiological pathways. The chain is Flagellar transcriptional regulator FlhD from Bordetella avium (strain 197N).